The primary structure comprises 710 residues: Forkhead box protein P2 (710 aa).

A compositionally biased stretch (polar residues) spans 1–28; it reads MMQESATETISNSSMNQNGMSTLSSQLD. Disordered regions lie at residues 1 to 44 and 272 to 334; these read MMQE…SSEV and HSQE…TGAS. The segment covering 273 to 283 has biased composition (basic and acidic residues); sequence SQEDNGIKHGG. The span at 287–300 shows a compositional bias: low complexity; that stretch reads TTNNSSSTTSSTTS. Residues 310 to 319 are compositionally biased toward polar residues; it reads SIVNGQSSVL. Over residues 321 to 332 the composition is skewed to basic and acidic residues; it reads ARRDSSSHEETG. A C2H2-type zinc finger spans residues 343-366; it reads CKWPGCESICEDFGQFLKHLNNEH. Residues 383–404 form a leucine-zipper region; that stretch reads VQQLEIQLSKERERLQAMMTHL. Positions 417 to 421 are CTBP1-binding; the sequence is PLNLV. A compositionally biased stretch (low complexity) spans 433 to 454; it reads TSPQSLPQTPTTPTAPVTPITQ. Residues 433 to 460 form a disordered region; it reads TSPQSLPQTPTTPTAPVTPITQGPSVIT. The segment at residues 499 to 589 is a DNA-binding region (fork-head); sequence RPPFTYATLI…SQKITGSPTL (91 aa). Disordered stretches follow at residues 644–663 and 673–710; these read LDHI…QPHI and VIAE…EDLE. Positions 694–710 are enriched in acidic residues; it reads LEDDREIEEEPLSEDLE.

In terms of assembly, forms homodimers and heterodimers with FOXP1 and FOXP4. Dimerization is required for DNA-binding. Interacts with CTBP1. Interacts with FOXP1. Interacts with TBR1. Interacts with ZMYM2.

It is found in the nucleus. Transcriptional repressor that may play a role in the specification and differentiation of lung epithelium. May also play a role in developing neural, gastrointestinal and cardiovascular tissues. Can act with CTBP1 to synergistically repress transcription but CTPBP1 is not essential. Plays a role in synapse formation by regulating SRPX2 levels. The sequence is that of Forkhead box protein P2 (Foxp2) from Rattus norvegicus (Rat).